We begin with the raw amino-acid sequence, 179 residues long: uncharacterized protein (179 aa).

It belongs to the CAPAB/TerDEXZ family.

This is an uncharacterized protein from Synechocystis sp. (strain ATCC 27184 / PCC 6803 / Kazusa).